The chain runs to 948 residues: Protocadherin alpha-10 (948 aa).

The signal sequence occupies residues 1–28; sequence MVSRCSCLGVQCLLLSLLLLAAWEVGSG. Cadherin domains lie at 29–132, 133–241, 242–349, 350–454, 455–564, and 587–689; these read QLHY…PPRF, SVTE…APIF, DRPV…SPEV, IVTS…APAF, AQPE…APAL, and GHVV…APEV. Over 29–695 the chain is Extracellular; that stretch reads QLHYSVYEEA…APEVALVDVN (667 aa). 2 N-linked (GlcNAc...) asparagine glycosylation sites follow: asparagine 256 and asparagine 264. Asparagine 547 is a glycosylation site (N-linked (GlcNAc...) asparagine). The chain crosses the membrane as a helical span at residues 696–716; sequence VYLIIAICAVSSLLVLTLLLY. Topologically, residues 717-948 are cytoplasmic; that stretch reads TALRCSAAPT…GNSTTDNSDQ (232 aa). PXXP repeat units follow at residues 732 to 735, 772 to 775, 797 to 800, 830 to 833, 871 to 874, and 889 to 892; these read PVKP, PSLP, PRQP, PGGP, PGNP, and PGSP. Positions 732–892 are 6 X 4 AA repeats of P-X-X-P; the sequence is PVKPTLVCSS…PDKFIIPGSP (161 aa). Disordered stretches follow at residues 783–804 and 827–948; these read DGED…NPDW and RAGP…NSDQ. Over residues 907 to 921 the composition is skewed to basic and acidic residues; the sequence is DKSDFITFGKKEETK.

The protein localises to the cell membrane. Functionally, potential calcium-dependent cell-adhesion protein. May be involved in the establishment and maintenance of specific neuronal connections in the brain. The sequence is that of Protocadherin alpha-10 (PCDHA10) from Pan troglodytes (Chimpanzee).